Here is a 454-residue protein sequence, read N- to C-terminus: Mitochondrial dynamics protein MID49 (454 aa).

The Mitochondrial intermembrane portion of the chain corresponds to M1 to D22. S13 is modified (phosphoserine). Residues F23–A43 form a helical membrane-spanning segment. The Cytoplasmic segment spans residues T44 to L454. A disordered region spans residues A76 to S119. Low complexity predominate over residues A88 to P103.

This sequence belongs to the MID49/MID51 family. As to quaternary structure, interacts with DNM1L. Expressed in all tissues tested with highest expression in heart and skeletal muscle.

It is found in the mitochondrion outer membrane. Its function is as follows. Mitochondrial outer membrane protein involved in the regulation of mitochondrial organization. It is required for mitochondrial fission and promotes the recruitment and association of the fission mediator dynamin-related protein 1 (DNM1L) to the mitochondrial surface independently of the mitochondrial fission FIS1 and MFF proteins. Regulates DNM1L GTPase activity. This Homo sapiens (Human) protein is Mitochondrial dynamics protein MID49 (MIEF2).